Consider the following 212-residue polypeptide: Histidine biosynthesis bifunctional protein HisIE (212 aa).

Positions 1-109 (MRPDFHKQEL…ELIPFDDSDI (109 aa)) are phosphoribosyl-AMP cyclohydrolase. Residues 110–212 (FSELEKQIID…KKEFHTRTAD (103 aa)) are phosphoribosyl-ATP pyrophosphohydrolase.

This sequence in the N-terminal section; belongs to the PRA-CH family. It in the C-terminal section; belongs to the PRA-PH family.

It localises to the cytoplasm. It catalyses the reaction 1-(5-phospho-beta-D-ribosyl)-ATP + H2O = 1-(5-phospho-beta-D-ribosyl)-5'-AMP + diphosphate + H(+). The catalysed reaction is 1-(5-phospho-beta-D-ribosyl)-5'-AMP + H2O = 1-(5-phospho-beta-D-ribosyl)-5-[(5-phospho-beta-D-ribosylamino)methylideneamino]imidazole-4-carboxamide. It participates in amino-acid biosynthesis; L-histidine biosynthesis; L-histidine from 5-phospho-alpha-D-ribose 1-diphosphate: step 2/9. It functions in the pathway amino-acid biosynthesis; L-histidine biosynthesis; L-histidine from 5-phospho-alpha-D-ribose 1-diphosphate: step 3/9. The protein is Histidine biosynthesis bifunctional protein HisIE (hisI) of Lactococcus lactis subsp. lactis (strain IL1403) (Streptococcus lactis).